The following is an 86-amino-acid chain: Large ribosomal subunit protein bL31B (86 aa).

Belongs to the bacterial ribosomal protein bL31 family. Type B subfamily. As to quaternary structure, part of the 50S ribosomal subunit.

The protein is Large ribosomal subunit protein bL31B of Salmonella agona (strain SL483).